The primary structure comprises 194 residues: 7-methyl-GTP pyrophosphatase (194 aa).

The active-site Proton acceptor is the Asp70.

Belongs to the Maf family. YceF subfamily. Requires a divalent metal cation as cofactor.

The protein localises to the cytoplasm. The catalysed reaction is N(7)-methyl-GTP + H2O = N(7)-methyl-GMP + diphosphate + H(+). Functionally, nucleoside triphosphate pyrophosphatase that hydrolyzes 7-methyl-GTP (m(7)GTP). May have a dual role in cell division arrest and in preventing the incorporation of modified nucleotides into cellular nucleic acids. This chain is 7-methyl-GTP pyrophosphatase, found in Vibrio vulnificus (strain YJ016).